The chain runs to 175 residues: MAVGPRYFVPFRRRREGKTDYYKRGKLIVAEQPRMVVRKTNRHIIVQMIVAEMEGDKTLVTANSAELLDYGYKGSTSNTPAAYLTGMLFAVKALNADHPAAILDIGLNRATYGAKVFAALKGAVEAGLDVPHGEEILPADERVKGEHIAAYAPDRAGDLVENVESAAQTIMKELA.

Belongs to the universal ribosomal protein uL18 family. As to quaternary structure, part of the 50S ribosomal subunit. Contacts the 5S and 23S rRNAs.

This is one of the proteins that bind and probably mediate the attachment of the 5S RNA into the large ribosomal subunit, where it forms part of the central protuberance. This Methanosphaerula palustris (strain ATCC BAA-1556 / DSM 19958 / E1-9c) protein is Large ribosomal subunit protein uL18.